The primary structure comprises 571 residues: MFLKKRHLEILKKMKETEMQNEIEKALPEEFKTRALELFILGFAELKGDKIIFTEAGKKLMEIVDKIDLEKIPDIFVDSEIIKIMELLEETGNVPEDWMLMLKERFLADENGLTEIGKEILKIYRETHPVVYLTPELLAFIKDMPKIGVYDELITYKNTKEYGDNIINALQAMRLLLISPKTESGKAFSTTKALNYVLKVASLVPNLSRALILRKEDFEILERGETTEEMTESGFYAEGKVTELGQAMMDTYKEMGKVEEKTLPIYVLEDEIKVLKAIEEIKEKYETNPEIIPTYDEIKKRTNIDDLGAVLHTLESKELIKREVVKNKDTYWMTEFGEKVKDLGEVSTDGMKAITYPESGDVPIAEWVIKGKEEGTVKRGITEKGKYLIKLSKTIKRKPYLTKYDISTLIKIPRKRYIHRDELVKLIQGHVGGDEKEIIKSLGEAESKGFIKELQNKMIKLTELGEEVKTAIEMAKIQELLATKFAVTPTTFNILKTIYDHKEEFDKVWKEKSEGKEHKENEIVLLAKYLSLTPEEIKKNLVILKNVGFIGKKGLTDAGVKLVEAYLNFYQ.

This is an uncharacterized protein from Methanocaldococcus jannaschii (strain ATCC 43067 / DSM 2661 / JAL-1 / JCM 10045 / NBRC 100440) (Methanococcus jannaschii).